The following is a 423-amino-acid chain: Ankyrin repeat and SAM domain-containing protein 4B (423 aa).

Positions 1 to 251 (MSTRYHQAAS…PKDFKEKLHF (251 aa)) are mediates localization to microvilli. ANK repeat units follow at residues 31–60 (DGMTPTLLAAYHGNLEALEIICSRGGDPDK), 64–93 (WGNTPLHYAASNGHTHCISFLVNFGANIFA), and 97–126 (DLKSPLDAAASREQKECVALLDKAATVQNT). Residues 130 to 169 (KRVTRLKEQALKNARKQMKECERLQERHQNKMARTYSKED) adopt a coiled-coil conformation. Disordered stretches follow at residues 158 to 181 (QNKMARTYSKEDSGTISSSHSTLS), 207 to 227 (KSKKNKDTTEQLEKDGRSGQR), and 303 to 335 (QRQGAAGTVEEEEEEEEEEEEEKREANGTAGDL). The segment covering 171 to 181 (GTISSSHSTLS) has biased composition (low complexity). Positions 207–224 (KSKKNKDTTEQLEKDGRS) are enriched in basic and acidic residues. The mediates interaction with MYO7B stretch occupies residues 253-352 (VEEDDDVQHE…EWEEDAVDAT (100 aa)). Positions 301–335 (LFQRQGAAGTVEEEEEEEEEEEEEKREANGTAGDL) form a coiled coil. The span at 311–324 (VEEEEEEEEEEEEE) shows a compositional bias: acidic residues. In terms of domain architecture, SAM spans 357 to 409 (FLQSQHLEEFLPIFMREQIDLEALLLCSDEDLQNIHMQLGPRKKVLSAIDKRK). The PDZ-binding; mediates interaction with USH1C signature appears at 421–423 (TSL).

Part of the IMAC/intermicrovillar adhesion complex/intermicrovillar tip-link complex composed of ANKS4B, MYO7B, USH1C, CDHR2 and CDHR5. Interacts with USH1C; the interaction is direct and is required for ANKS4B localization to the tip of microvilli. Interacts with MYO7B; the interaction is direct. May interact with HSPA5. In terms of tissue distribution, cochlea, kidney, lung, liver, pancreas, salivary gland and small intestine (at protein level). Expressed in kidney, small intestine, pancreas, liver and colon. Not detected in heart, spleen and brain.

The protein resides in the cell projection. It localises to the microvillus. As part of the intermicrovillar adhesion complex/IMAC plays a role in epithelial brush border differentiation, controlling microvilli organization and length. Plays a role in assembly of the complex. May play a role in cellular response to endoplasmic reticulum stress. The protein is Ankyrin repeat and SAM domain-containing protein 4B of Mus musculus (Mouse).